The primary structure comprises 293 residues: Elongation factor Ts (293 aa).

An involved in Mg(2+) ion dislocation from EF-Tu region spans residues 80 to 83; sequence TDFV.

Belongs to the EF-Ts family.

It localises to the cytoplasm. Functionally, associates with the EF-Tu.GDP complex and induces the exchange of GDP to GTP. It remains bound to the aminoacyl-tRNA.EF-Tu.GTP complex up to the GTP hydrolysis stage on the ribosome. This Lacticaseibacillus casei (strain BL23) (Lactobacillus casei) protein is Elongation factor Ts.